The primary structure comprises 380 residues: Queuine tRNA-ribosyltransferase (380 aa).

Residue D95 is the Proton acceptor of the active site. Residues 95–99 (DSGGF), D149, Q192, and G219 each bind substrate. An RNA binding region spans residues 250–256 (GVGSPDA). Catalysis depends on D269, which acts as the Nucleophile. An RNA binding; important for wobble base 34 recognition region spans residues 274–278 (TRIAR). The Zn(2+) site is built by C307, C309, C312, and H338.

It belongs to the queuine tRNA-ribosyltransferase family. As to quaternary structure, homodimer. Within each dimer, one monomer is responsible for RNA recognition and catalysis, while the other monomer binds to the replacement base PreQ1. It depends on Zn(2+) as a cofactor.

It carries out the reaction 7-aminomethyl-7-carbaguanine + guanosine(34) in tRNA = 7-aminomethyl-7-carbaguanosine(34) in tRNA + guanine. The protein operates within tRNA modification; tRNA-queuosine biosynthesis. Its function is as follows. Catalyzes the base-exchange of a guanine (G) residue with the queuine precursor 7-aminomethyl-7-deazaguanine (PreQ1) at position 34 (anticodon wobble position) in tRNAs with GU(N) anticodons (tRNA-Asp, -Asn, -His and -Tyr). Catalysis occurs through a double-displacement mechanism. The nucleophile active site attacks the C1' of nucleotide 34 to detach the guanine base from the RNA, forming a covalent enzyme-RNA intermediate. The proton acceptor active site deprotonates the incoming PreQ1, allowing a nucleophilic attack on the C1' of the ribose to form the product. After dissociation, two additional enzymatic reactions on the tRNA convert PreQ1 to queuine (Q), resulting in the hypermodified nucleoside queuosine (7-(((4,5-cis-dihydroxy-2-cyclopenten-1-yl)amino)methyl)-7-deazaguanosine). This is Queuine tRNA-ribosyltransferase from Latilactobacillus sakei subsp. sakei (strain 23K) (Lactobacillus sakei subsp. sakei).